Reading from the N-terminus, the 165-residue chain is UPF0303 protein BamMC406_1480 (165 aa).

Belongs to the UPF0303 family.

This Burkholderia ambifaria (strain MC40-6) protein is UPF0303 protein BamMC406_1480.